Consider the following 113-residue polypeptide: Photosystem II reaction center Psb28 protein (113 aa).

This sequence belongs to the Psb28 family. Part of the photosystem II complex.

Its subcellular location is the cellular thylakoid membrane. The protein is Photosystem II reaction center Psb28 protein of Prochlorococcus marinus (strain NATL2A).